Reading from the N-terminus, the 288-residue chain is Ribosomal RNA small subunit methyltransferase I (288 aa).

It belongs to the methyltransferase superfamily. RsmI family.

The protein resides in the cytoplasm. The enzyme catalyses cytidine(1402) in 16S rRNA + S-adenosyl-L-methionine = 2'-O-methylcytidine(1402) in 16S rRNA + S-adenosyl-L-homocysteine + H(+). Functionally, catalyzes the 2'-O-methylation of the ribose of cytidine 1402 (C1402) in 16S rRNA. The polypeptide is Ribosomal RNA small subunit methyltransferase I (Vibrio cholerae serotype O1 (strain ATCC 39315 / El Tor Inaba N16961)).